The primary structure comprises 952 residues: Plasma membrane ATPase 4 (952 aa).

The Cytoplasmic segment spans residues 1–64 (MAKAISLEEI…EKNESKILKF (64 aa)). A helical transmembrane segment spans residues 65–84 (LGFMWNPLSWVMEAAAVMAI). Residues 85 to 96 (ALANGDGKPPDW) lie on the Extracellular side of the membrane. A helical membrane pass occupies residues 97–117 (QDFIGIICLLVINSTISFIEE). Topologically, residues 118 to 246 (NNAGNAAAAL…GHFQKVLTAI (129 aa)) are cytoplasmic. The chain crosses the membrane as a helical span at residues 247-267 (GNFCICSIAIGMLVEIIVMYP). Residues 268–277 (IQHRKYRDGI) lie on the Extracellular side of the membrane. A helical transmembrane segment spans residues 278 to 299 (DNLLVLLIGGIPIAMPTVLSVT). Over 300–646 (MAIGSHRLSQ…TSRAIFQRMK (347 aa)) the chain is Cytoplasmic. Asp-332 acts as the 4-aspartylphosphate intermediate in catalysis. Mg(2+)-binding residues include Asp-591 and Asp-595. Residues 647-668 (NYTIYAVSITIRIVFGFMFIAL) traverse the membrane as a helical segment. Over 669-673 (IWKYD) the chain is Extracellular. A helical membrane pass occupies residues 674 to 696 (FSAFMVLIIAILNDGTIMTISKD). Residues 697–712 (RVKPSPMPDSWKLKEI) are Cytoplasmic-facing. A helical membrane pass occupies residues 713 to 733 (FATGVVLGGYQALMTVVFFWA). Over 734-754 (MHDTDFFSDKFGVKSLRNSDE) the chain is Extracellular. The chain crosses the membrane as a helical span at residues 755 to 775 (EMMSALYLQVSIISQALIFVT). At 776-787 (RSRSWSFLERPG) the chain is on the cytoplasmic side. The helical transmembrane segment at 788–808 (MLLVIAFMIAQLVATLIAVYA) threads the bilayer. Over 809–817 (NWAFARVKG) the chain is Extracellular. Residues 818-838 (CGWGWAGVIWLYSIIFYLPLD) form a helical membrane-spanning segment. Residues 839–952 (IMKFAIRYIL…IETIQQHYTV (114 aa)) are Cytoplasmic-facing.

Belongs to the cation transport ATPase (P-type) (TC 3.A.3) family. Type IIIA subfamily. As to expression, expressed at high levels in root, stem, leaf and flower.

The protein resides in the cell membrane. The catalysed reaction is ATP + H2O + H(+)(in) = ADP + phosphate + 2 H(+)(out). The plasma membrane ATPase of plants and fungi is a hydrogen ion pump. The proton gradient it generates drives the active transport of nutrients by H(+)-symport. The resulting external acidification and/or internal alkinization may mediate growth responses. The chain is Plasma membrane ATPase 4 (PMA4) from Nicotiana plumbaginifolia (Leadwort-leaved tobacco).